The primary structure comprises 423 residues: D-tagatose-1,6-bisphosphate aldolase subunit GatZ (423 aa).

The protein belongs to the GatZ/KbaZ family. GatZ subfamily. In terms of assembly, forms a complex with GatY.

It functions in the pathway carbohydrate metabolism; D-tagatose 6-phosphate degradation; D-glyceraldehyde 3-phosphate and glycerone phosphate from D-tagatose 6-phosphate: step 2/2. In terms of biological role, component of the tagatose-1,6-bisphosphate aldolase GatYZ that is required for full activity and stability of the Y subunit. Could have a chaperone-like function for the proper and stable folding of GatY. When expressed alone, GatZ does not show any aldolase activity. Is involved in the catabolism of galactitol. This Salmonella heidelberg (strain SL476) protein is D-tagatose-1,6-bisphosphate aldolase subunit GatZ.